We begin with the raw amino-acid sequence, 338 residues long: Anthranilate phosphoribosyltransferase (338 aa).

Residues Gly-83, 86–87 (GD), Ser-91, 93–96 (NCST), 111–119 (KHGNRAVSS), and Ala-123 contribute to the 5-phospho-alpha-D-ribose 1-diphosphate site. Residue Gly-83 participates in anthranilate binding. Residue Ser-95 coordinates Mg(2+). Anthranilate is bound at residue Asn-114. Arg-169 lines the anthranilate pocket. Mg(2+) is bound by residues Asp-228 and Glu-229.

This sequence belongs to the anthranilate phosphoribosyltransferase family. In terms of assembly, homodimer. Mg(2+) serves as cofactor.

The catalysed reaction is N-(5-phospho-beta-D-ribosyl)anthranilate + diphosphate = 5-phospho-alpha-D-ribose 1-diphosphate + anthranilate. The protein operates within amino-acid biosynthesis; L-tryptophan biosynthesis; L-tryptophan from chorismate: step 2/5. Its function is as follows. Catalyzes the transfer of the phosphoribosyl group of 5-phosphorylribose-1-pyrophosphate (PRPP) to anthranilate to yield N-(5'-phosphoribosyl)-anthranilate (PRA). The chain is Anthranilate phosphoribosyltransferase from Nitratidesulfovibrio vulgaris (strain DSM 19637 / Miyazaki F) (Desulfovibrio vulgaris).